A 332-amino-acid polypeptide reads, in one-letter code: Ribosomal RNA small subunit methyltransferase H (332 aa).

S-adenosyl-L-methionine contacts are provided by residues 36–38, Asp54, Phe81, Asp102, and Gln109; that span reads GGY. Residues 284–332 form a disordered region; it reads VTAGQEEVSANPRARSAKLRAAERTAAPATADDGESPGWPSLANVMRGG.

Belongs to the methyltransferase superfamily. RsmH family.

The protein localises to the cytoplasm. It catalyses the reaction cytidine(1402) in 16S rRNA + S-adenosyl-L-methionine = N(4)-methylcytidine(1402) in 16S rRNA + S-adenosyl-L-homocysteine + H(+). Specifically methylates the N4 position of cytidine in position 1402 (C1402) of 16S rRNA. The chain is Ribosomal RNA small subunit methyltransferase H from Nitrobacter hamburgensis (strain DSM 10229 / NCIMB 13809 / X14).